The following is a 626-amino-acid chain: Chaperone protein HtpG (626 aa).

The segment at 1–343 (MHKQTLSFQA…SADLPLNVSR (343 aa)) is a; substrate-binding. The tract at residues 344-558 (ELLQESRAVK…DGDMSTQLAR (215 aa)) is b. Residues 559–626 (MLKQAGQAVP…YVKRVNALLV (68 aa)) are c.

The protein belongs to the heat shock protein 90 family. In terms of assembly, homodimer.

The protein localises to the cytoplasm. In terms of biological role, molecular chaperone. Has ATPase activity. The chain is Chaperone protein HtpG from Polaromonas sp. (strain JS666 / ATCC BAA-500).